A 1715-amino-acid polypeptide reads, in one-letter code: Protein PHYLLO, chloroplastic (1715 aa).

The transit peptide at 1–19 (MRSSFLVSNPPFLPSLIPR) directs the protein to the chloroplast. An inactive isochorismate synthase region spans residues 20–273 (YSSRKSIRRS…EKSIFQVSSH (254 aa)). Positions 363–933 (NAVWASAIIE…GTKSELEDAL (571 aa)) are 2-succinyl-5-enolpyruvyl-6-hydroxy-3-cyclohexene-1-carboxylate synthase. The helical transmembrane segment at 429-449 (AVIITSSGTAVSNLLPAVVEA) threads the bilayer. The segment at 981-1364 (FLHPMIKNVL…SEDVMMNTLG (384 aa)) is O-succinylbenzoate synthase. Catalysis depends on Lys1170, which acts as the Proton donor; for the o-succinylbenzoate synthase activity. Asp1202, Glu1228, and Asp1251 together coordinate Mg(2+). Catalysis depends on Lys1279, which acts as the Proton acceptor; for the o-succinylbenzoate synthase activity. The 2-succinyl-6-hydroxy-2,4-cyclohexadiene-1-carboxylate synthase stretch occupies residues 1418–1715 (HFIRVHDVGE…QKLLLALKEM (298 aa)). In terms of domain architecture, AB hydrolase-1 spans 1435–1540 (LFLHGFLGTG…EGAVVVSGSP (106 aa)).

This sequence in the N-terminal section; belongs to the isochorismate synthase family. It in the 2nd section; belongs to the TPP enzyme family. MenD subfamily. In the 3rd section; belongs to the mandelate racemase/muconate lactonizing enzyme family. MenC type 1 subfamily. The protein in the C-terminal section; belongs to the AB hydrolase superfamily. MenH family. It depends on Mg(2+) as a cofactor. Mn(2+) is required as a cofactor. The cofactor is thiamine diphosphate.

It is found in the plastid. Its subcellular location is the chloroplast membrane. The catalysed reaction is isochorismate + 2-oxoglutarate + H(+) = 5-enolpyruvoyl-6-hydroxy-2-succinyl-cyclohex-3-ene-1-carboxylate + CO2. It carries out the reaction (1R,6R)-6-hydroxy-2-succinyl-cyclohexa-2,4-diene-1-carboxylate = 2-succinylbenzoate + H2O. The enzyme catalyses 5-enolpyruvoyl-6-hydroxy-2-succinyl-cyclohex-3-ene-1-carboxylate = (1R,6R)-6-hydroxy-2-succinyl-cyclohexa-2,4-diene-1-carboxylate + pyruvate. Its function is as follows. Multifunctional enzyme required for phylloquinone (vitamin K1) biosynthesis. The chain is Protein PHYLLO, chloroplastic (PHYLLO) from Arabidopsis thaliana (Mouse-ear cress).